Consider the following 213-residue polypeptide: Retinitis pigmentosa 9 protein homolog (213 aa).

Positions 1 to 61 are disordered; the sequence is MSSGAGSRRP…IKEDETKPED (61 aa). A PIM1-binding region spans residues 1–147; it reads MSSGAGSRRP…RENKRHEKDV (147 aa). Composition is skewed to basic and acidic residues over residues 9-21 and 52-61; these read RPRE…LQRR and IKEDETKPED. A CCHC-type zinc finger spans residues 96–114; it reads QCWRCKRYGHRTGDKECPF. A Glycyl lysine isopeptide (Lys-Gly) (interchain with G-Cter in SUMO2) cross-link involves residue Lys-121. Residues 154-213 are disordered; that stretch reads QLLEDSTSDDDGSSSSSSGDREKRKKRKKKEKHKKRKKEKKKKKKRKHKASKSSESSDSE. Over residues 176 to 204 the composition is skewed to basic residues; that stretch reads KRKKRKKKEKHKKRKKEKKKKKKRKHKAS. Phosphoserine; by PIM1; in vitro is present on residues Ser-204 and Ser-206.

In terms of assembly, binds to PIM1. Binds to ZNHIT4. As to expression, highly expressed in the testis, moderately in the kidney, liver and spleen, and weakly in the skeletal muscle and heart.

It is found in the nucleus. In terms of biological role, is thought to be a target protein for the PIM1 kinase. May play some roles in B-cell proliferation in association with PIM1. The polypeptide is Retinitis pigmentosa 9 protein homolog (rp9) (Mus musculus (Mouse)).